The sequence spans 547 residues: Chaperonin GroEL (547 aa).

ATP contacts are provided by residues 30–33, K51, 87–91, G415, and D496; these read TLGP and DGTTT. A disordered region spans residues 527 to 547; sequence SDKAEPMPMRGGMGGMGGMDF. A compositionally biased stretch (gly residues) spans 537 to 547; that stretch reads GGMGGMGGMDF.

The protein belongs to the chaperonin (HSP60) family. In terms of assembly, forms a cylinder of 14 subunits composed of two heptameric rings stacked back-to-back. Interacts with the co-chaperonin GroES.

It is found in the cytoplasm. The enzyme catalyses ATP + H2O + a folded polypeptide = ADP + phosphate + an unfolded polypeptide.. Its function is as follows. Together with its co-chaperonin GroES, plays an essential role in assisting protein folding. The GroEL-GroES system forms a nano-cage that allows encapsulation of the non-native substrate proteins and provides a physical environment optimized to promote and accelerate protein folding. The sequence is that of Chaperonin GroEL from Rickettsia rickettsii (strain Sheila Smith).